Reading from the N-terminus, the 123-residue chain is Small ribosomal subunit protein uS12 (123 aa).

Aspartate 89 carries the post-translational modification 3-methylthioaspartic acid.

Belongs to the universal ribosomal protein uS12 family. Part of the 30S ribosomal subunit. Contacts proteins S8 and S17. May interact with IF1 in the 30S initiation complex.

With S4 and S5 plays an important role in translational accuracy. Its function is as follows. Interacts with and stabilizes bases of the 16S rRNA that are involved in tRNA selection in the A site and with the mRNA backbone. Located at the interface of the 30S and 50S subunits, it traverses the body of the 30S subunit contacting proteins on the other side and probably holding the rRNA structure together. The combined cluster of proteins S8, S12 and S17 appears to hold together the shoulder and platform of the 30S subunit. The protein is Small ribosomal subunit protein uS12 of Bradyrhizobium diazoefficiens (strain JCM 10833 / BCRC 13528 / IAM 13628 / NBRC 14792 / USDA 110).